The sequence spans 252 residues: MKFSDPHLLPAGLERSLRFYVTNPSPCPYLPDRKERKAFTNLAIPEADALHNVLSQSGFRRSQSIAYRPACTRCNACKSVRVATREYDISRNDRRVIARNAHLVRRPVAAQATREQFRLLKSYVVTRHDNGGMSDMTYRDYVAMVGGSPVQSLIFEYRDGPEPDAPLVAAAITDVLRDGLSMVYTFFDPAKTSQSLGHYLILDHIRHAHDLGLPHLYLGYWVKGSPKMDYKRRYKPLEVLDGDRWRPLRDDE.

Belongs to the R-transferase family. Bpt subfamily.

The protein localises to the cytoplasm. The enzyme catalyses N-terminal L-glutamyl-[protein] + L-leucyl-tRNA(Leu) = N-terminal L-leucyl-L-glutamyl-[protein] + tRNA(Leu) + H(+). The catalysed reaction is N-terminal L-aspartyl-[protein] + L-leucyl-tRNA(Leu) = N-terminal L-leucyl-L-aspartyl-[protein] + tRNA(Leu) + H(+). Functions in the N-end rule pathway of protein degradation where it conjugates Leu from its aminoacyl-tRNA to the N-termini of proteins containing an N-terminal aspartate or glutamate. The chain is Aspartate/glutamate leucyltransferase from Hyphomonas neptunium (strain ATCC 15444).